We begin with the raw amino-acid sequence, 579 residues long: Copine-E (579 aa).

C2 domains are found at residues 45–175 (IDPS…KVIG) and 183–304 (QTGT…EFTL). Asp-80, Asp-86, Asp-145, Asp-147, and Asp-153 together coordinate Ca(2+). One can recognise a VWFA domain in the interval 345–552 (NLMIAIDCTA…KKYENDPEQL (208 aa)).

Belongs to the copine family. Ca(2+) is required as a cofactor.

The sequence is that of Copine-E (cpnE) from Dictyostelium discoideum (Social amoeba).